We begin with the raw amino-acid sequence, 529 residues long: ATP synthase subunit alpha (529 aa).

Residue 173–180 coordinates ATP; sequence GDRQTGKT.

It belongs to the ATPase alpha/beta chains family. F-type ATPases have 2 components, CF(1) - the catalytic core - and CF(0) - the membrane proton channel. CF(1) has five subunits: alpha(3), beta(3), gamma(1), delta(1), epsilon(1). CF(0) has three main subunits: a(1), b(2) and c(9-12). The alpha and beta chains form an alternating ring which encloses part of the gamma chain. CF(1) is attached to CF(0) by a central stalk formed by the gamma and epsilon chains, while a peripheral stalk is formed by the delta and b chains.

It is found in the cell membrane. It catalyses the reaction ATP + H2O + 4 H(+)(in) = ADP + phosphate + 5 H(+)(out). Functionally, produces ATP from ADP in the presence of a proton gradient across the membrane. The alpha chain is a regulatory subunit. This chain is ATP synthase subunit alpha, found in Streptomyces lividans.